The chain runs to 185 residues: C-phycoerythrin beta chain (185 aa).

Positions 49 and 60 each coordinate (2R,3E)-phycoerythrobilin. N71 bears the N4-methylasparagine mark. The (2R,3E)-phycoerythrobilin site is built by C81 and C166.

The protein belongs to the phycobiliprotein family. Heterodimer of an alpha and a beta chain. Post-translationally, contains three covalently linked bilin chromophores.

It is found in the cellular thylakoid membrane. In terms of biological role, light-harvesting photosynthetic bile pigment-protein from the phycobiliprotein complex. This is C-phycoerythrin beta chain (cpeB) from Pseudanabaena tenuis (strain PCC 7409).